The chain runs to 297 residues: MKAKTLSRHLREGVKNLSRNGWMTFASVSAVTVTLLLVGVFLTAIMNMNHFATKVEQDVEIRVHIDPAAKEADQKKLEDDMSKIAKVESIKYSSKEEELKRLIKSLGDSGKTFELFEQDNPLKNVFVVKAKEPTDTATIAKKIEKMQFVSNVQYGKGQVERLFDTVKTGRNIGIVLIAGLLFTAMFLISNTIKITIYARSTEIEIMKLVGATNWFIRWPFLLEGLFLGVLGSIIPIGLILVTYNSLQGMFNEKLGGTIFELLPYSPFVFQLAGLLVLIGALIGMWGSVMSIRRFLKV.

Residues 1-24 (MKAKTLSRHLREGVKNLSRNGWMT) lie on the Cytoplasmic side of the membrane. A helical membrane pass occupies residues 25–45 (FASVSAVTVTLLLVGVFLTAI). The Extracellular portion of the chain corresponds to 46 to 171 (MNMNHFATKV…LFDTVKTGRN (126 aa)). Residues 172 to 192 (IGIVLIAGLLFTAMFLISNTI) traverse the membrane as a helical segment. Residues 193–219 (KITIYARSTEIEIMKLVGATNWFIRWP) lie on the Cytoplasmic side of the membrane. Residues 220–240 (FLLEGLFLGVLGSIIPIGLIL) traverse the membrane as a helical segment. At 241 to 270 (VTYNSLQGMFNEKLGGTIFELLPYSPFVFQ) the chain is on the extracellular side. A helical membrane pass occupies residues 271–291 (LAGLLVLIGALIGMWGSVMSI). The Cytoplasmic portion of the chain corresponds to 292-297 (RRFLKV).

Belongs to the ABC-4 integral membrane protein family. FtsX subfamily. As to quaternary structure, interacts with FtsE.

The protein resides in the cell membrane. Functionally, part of the ABC transporter FtsEX involved in asymmetric cellular division facilitating the initiation of sporulation. The sequence is that of Cell division protein FtsX from Bacillus anthracis.